Consider the following 466-residue polypeptide: F-box/WD repeat-containing protein 15 (466 aa).

The F-box domain occupies 1 to 45; it reads MAIHLPCLPMMKILSYLDAYSLLQAAQVNKDWNELASSDVLWRKL. WD repeat units lie at residues 101 to 143, 146 to 185, 187 to 228, 339 to 379, and 381 to 419; these read GYAC…ITWK, EQPASIKLLTTLPEMHIAVTVDIQSTIKLWDCHNREALAT, NLKS…LIST, LQCH…KTFQ, and CPEMIVKLSVDPLHVIVICNTGSMDVYAWEERSLLLRKC.

As to quaternary structure, part of an SCF (SKP1-CUL1-F-box protein) E3 ubiquitin-protein ligase complex. Interacts with KAT7 and SKP1. As to expression, specifically expressed in oocytes from follicles of the medullary region of the ovary.

It is found in the cytoplasm. Its subcellular location is the cytosol. The protein localises to the endoplasmic reticulum. It localises to the nucleus. It functions in the pathway protein modification; protein ubiquitination. Functionally, substrate-recognition component of an SCF (SKP1-CUL1-F-box protein)-type E3 ubiquitin ligase complex. Promotes KAT7 ubiquitination and subsequent degradation in collaboration with MAP2K1 kinase, leading to reduced histone H3K14 acetylation and increased cell proliferation. This Mus musculus (Mouse) protein is F-box/WD repeat-containing protein 15.